Reading from the N-terminus, the 124-residue chain is Urease subunit beta (124 aa).

It belongs to the urease beta subunit family. As to quaternary structure, heterotrimer of UreA (gamma), UreB (beta) and UreC (alpha) subunits. Three heterotrimers associate to form the active enzyme.

It localises to the cytoplasm. It carries out the reaction urea + 2 H2O + H(+) = hydrogencarbonate + 2 NH4(+). Its pathway is nitrogen metabolism; urea degradation; CO(2) and NH(3) from urea (urease route): step 1/1. This is Urease subunit beta from Bacillus velezensis (strain DSM 23117 / BGSC 10A6 / LMG 26770 / FZB42) (Bacillus amyloliquefaciens subsp. plantarum).